Reading from the N-terminus, the 140-residue chain is Small ribosomal subunit protein uS19 (140 aa).

The protein belongs to the universal ribosomal protein uS19 family.

Its function is as follows. Protein S19 forms a complex with S13 that binds strongly to the 16S ribosomal RNA. The sequence is that of Small ribosomal subunit protein uS19 (rps19) from Sulfurisphaera tokodaii (strain DSM 16993 / JCM 10545 / NBRC 100140 / 7) (Sulfolobus tokodaii).